A 166-amino-acid chain; its full sequence is Small ribosomal subunit protein bS18m (166 aa).

The N-terminal 31 residues, 1 to 31, are a transit peptide targeting the mitochondrion; it reads MLGRRIFSPAPNRGFILCNLIQSNNSTRRGF. The segment at 29–48 is disordered; sequence RGFSDNRKFNERNSEASSNV. A compositionally biased stretch (basic and acidic residues) spans 30–42; that stretch reads GFSDNRKFNERNS.

Belongs to the bacterial ribosomal protein bS18 family. Component of the mitochondrial small ribosomal subunit (mt-SSU). Mature yeast 74S mitochondrial ribosomes consist of a small (37S) and a large (54S) subunit. The 37S small subunit contains a 15S ribosomal RNA (15S mt-rRNA) and at least 32 different proteins. The 54S large subunit contains a 21S rRNA (21S mt-rRNA) and at least 45 different proteins.

It is found in the mitochondrion. In terms of biological role, component of the mitochondrial ribosome (mitoribosome), a dedicated translation machinery responsible for the synthesis of mitochondrial genome-encoded proteins, including at least some of the essential transmembrane subunits of the mitochondrial respiratory chain. The mitoribosomes are attached to the mitochondrial inner membrane and translation products are cotranslationally integrated into the membrane. The sequence is that of Small ribosomal subunit protein bS18m (rsm18) from Schizosaccharomyces pombe (strain 972 / ATCC 24843) (Fission yeast).